Consider the following 689-residue polypeptide: Methionine--tRNA ligase (689 aa).

A 'HIGH' region motif is present at residues 19 to 29 (PYPTGDLHIGH). Residues cysteine 150, cysteine 153, cysteine 162, and cysteine 166 each coordinate Zn(2+). The 'KMSKS' region signature appears at 338-342 (GLSTS). Threonine 341 contacts ATP. The 99-residue stretch at 591–689 (EFQALDLRVG…EDSEPGTKVM (99 aa)) folds into the tRNA-binding domain.

It belongs to the class-I aminoacyl-tRNA synthetase family. MetG type 1 subfamily. As to quaternary structure, homodimer. Zn(2+) is required as a cofactor.

The protein resides in the cytoplasm. It catalyses the reaction tRNA(Met) + L-methionine + ATP = L-methionyl-tRNA(Met) + AMP + diphosphate. Is required not only for elongation of protein synthesis but also for the initiation of all mRNA translation through initiator tRNA(fMet) aminoacylation. The polypeptide is Methionine--tRNA ligase (Halobacterium salinarum (strain ATCC 700922 / JCM 11081 / NRC-1) (Halobacterium halobium)).